The primary structure comprises 139 residues: Large ribosomal subunit protein uL16 (139 aa).

Residues methionine 1–valine 16 show a composition bias toward basic residues. Positions methionine 1–lysine 22 are disordered.

The protein belongs to the universal ribosomal protein uL16 family. In terms of assembly, part of the 50S ribosomal subunit.

In terms of biological role, binds 23S rRNA and is also seen to make contacts with the A and possibly P site tRNAs. The sequence is that of Large ribosomal subunit protein uL16 from Bifidobacterium longum subsp. infantis (strain ATCC 15697 / DSM 20088 / JCM 1222 / NCTC 11817 / S12).